A 261-amino-acid chain; its full sequence is Chanoclavine-I dehydrogenase easD (261 aa).

Positions 1 to 20 (MPSMTSKVFAITGGASGIGA) are cleaved as a signal peptide. Isoleucine 18 contributes to the NADP(+) binding site. A glycan (N-linked (GlcNAc...) asparagine) is linked at asparagine 43. The NADP(+) site is built by aspartate 66, arginine 132, tyrosine 166, lysine 170, and threonine 201. Residue tyrosine 166 is the Proton donor of the active site. Lysine 170 functions as the Lowers pKa of active site Tyr in the catalytic mechanism.

Belongs to the short-chain dehydrogenases/reductases (SDR) family. In terms of assembly, homotetramer.

It carries out the reaction chanoclavine-I + NAD(+) = chanoclavine-I aldehyde + NADH + H(+). The protein operates within alkaloid biosynthesis; ergot alkaloid biosynthesis. Functionally, chanoclavine-I dehydrogenase; part of the gene cluster that mediates the biosynthesis of fungal ergot alkaloid. DmaW catalyzes the first step of ergot alkaloid biosynthesis by condensing dimethylallyl diphosphate (DMAP) and tryptophan to form 4-dimethylallyl-L-tryptophan. The second step is catalyzed by the methyltransferase easF that methylates 4-dimethylallyl-L-tryptophan in the presence of S-adenosyl-L-methionine, resulting in the formation of 4-dimethylallyl-L-abrine. The catalase easC and the FAD-dependent oxidoreductase easE then transform 4-dimethylallyl-L-abrine to chanoclavine-I which is further oxidized by easD in the presence of NAD(+), resulting in the formation of chanoclavine-I aldehyde. Agroclavine dehydrogenase easG then mediates the conversion of chanoclavine-I aldehyde to agroclavine via a non-enzymatic adduct reaction: the substrate is an iminium intermediate that is formed spontaneously from chanoclavine-I aldehyde in the presence of glutathione. The presence of easA is not required to complete this reaction. Further conversion of agroclavine to paspalic acid is a two-step process involving oxidation of agroclavine to elymoclavine and of elymoclavine to paspalic acid, the second step being performed by the elymoclavine oxidase cloA. Paspalic acid is then further converted to D-lysergic acid. Ergopeptines are assembled from D-lysergic acid and three different amino acids by the D-lysergyl-peptide-synthetases composed each of a monomudular and a trimodular nonribosomal peptide synthetase subunit. LpsB and lpsC encode the monomodular subunits responsible for D-lysergic acid activation and incorporation into the ergopeptine backbone. LpsA1 and A2 subunits encode the trimodular nonribosomal peptide synthetase assembling the tripeptide portion of ergopeptines. LpsA1 is responsible for formation of the major ergopeptine, ergotamine, and lpsA2 for alpha-ergocryptine, the minor ergopeptine of the total alkaloid mixture elaborated by C.purpurea. D-lysergyl-tripeptides are assembled by the nonribosomal peptide synthetases and released as N-(D-lysergyl-aminoacyl)-lactams. Cyclolization of the D-lysergyl-tripeptides is performed by the Fe(2+)/2-ketoglutarate-dependent dioxygenase easH which introduces a hydroxyl group into N-(D-lysergyl-aminoacyl)-lactam at alpha-C of the aminoacyl residue followed by spontaneous condensation with the terminal lactam carbonyl group. This is Chanoclavine-I dehydrogenase easD from Claviceps purpurea (Ergot fungus).